We begin with the raw amino-acid sequence, 546 residues long: CTP synthase (546 aa).

The interval 1–266 (MTTRYIFVTG…DDLVVKRFGL (266 aa)) is amidoligase domain. Ser-14 is a CTP binding site. Ser-14 is a UTP binding site. ATP is bound by residues 15-20 (SLGKGI) and Asp-72. The Mg(2+) site is built by Asp-72 and Glu-140. CTP is bound by residues 147-149 (DIE), 187-192 (KTKPTQ), and Lys-223. UTP is bound by residues 187–192 (KTKPTQ) and Lys-223. Position 239–241 (239–241 (KDV)) interacts with ATP. The region spanning 291–542 (VIGMVGKYIE…VAAASAHQKR (252 aa)) is the Glutamine amidotransferase type-1 domain. Residue Gly-352 participates in L-glutamine binding. The active-site Nucleophile; for glutamine hydrolysis is Cys-379. Residues 380-383 (LGMQ), Glu-403, and Arg-470 each bind L-glutamine. Active-site residues include His-515 and Glu-517.

The protein belongs to the CTP synthase family. Homotetramer.

The catalysed reaction is UTP + L-glutamine + ATP + H2O = CTP + L-glutamate + ADP + phosphate + 2 H(+). The enzyme catalyses L-glutamine + H2O = L-glutamate + NH4(+). It carries out the reaction UTP + NH4(+) + ATP = CTP + ADP + phosphate + 2 H(+). It participates in pyrimidine metabolism; CTP biosynthesis via de novo pathway; CTP from UDP: step 2/2. Allosterically activated by GTP, when glutamine is the substrate; GTP has no effect on the reaction when ammonia is the substrate. The allosteric effector GTP functions by stabilizing the protein conformation that binds the tetrahedral intermediate(s) formed during glutamine hydrolysis. Inhibited by the product CTP, via allosteric rather than competitive inhibition. Catalyzes the ATP-dependent amination of UTP to CTP with either L-glutamine or ammonia as the source of nitrogen. Regulates intracellular CTP levels through interactions with the four ribonucleotide triphosphates. The sequence is that of CTP synthase from Shewanella sp. (strain MR-7).